Consider the following 141-residue polypeptide: Nucleoside diphosphate kinase (141 aa).

Residues lysine 11, phenylalanine 59, arginine 87, threonine 93, arginine 104, and asparagine 114 each coordinate ATP. Histidine 117 functions as the Pros-phosphohistidine intermediate in the catalytic mechanism.

Belongs to the NDK family. As to quaternary structure, homotetramer. The cofactor is Mg(2+).

It is found in the cytoplasm. It catalyses the reaction a 2'-deoxyribonucleoside 5'-diphosphate + ATP = a 2'-deoxyribonucleoside 5'-triphosphate + ADP. It carries out the reaction a ribonucleoside 5'-diphosphate + ATP = a ribonucleoside 5'-triphosphate + ADP. Functionally, major role in the synthesis of nucleoside triphosphates other than ATP. The ATP gamma phosphate is transferred to the NDP beta phosphate via a ping-pong mechanism, using a phosphorylated active-site intermediate. This is Nucleoside diphosphate kinase from Xylella fastidiosa (strain M23).